A 1136-amino-acid chain; its full sequence is Phytochrome (1136 aa).

Residues 1–28 (MSTTRPRAATHSASSGSVSRSSKHSARV) are disordered. The segment covering 11 to 20 (HSASSGSVSR) has biased composition (low complexity). Residues 231-414 (DIRLLCDTVV…VFGIQLNKEV (184 aa)) form the GAF domain. Cys-336 is a binding site for phytochromobilin. PAS domains follow at residues 629–699 (VTNE…LQGE) and 762–833 (DYRA…TKLR). The Histidine kinase domain maps to 913–1132 (YIRQEIRNPL…IINVEFPLAQ (220 aa)).

This sequence belongs to the phytochrome family. Homodimer. In terms of processing, contains one covalently linked phytochromobilin chromophore.

Functionally, regulatory photoreceptor which exists in two forms that are reversibly interconvertible by light: the Pr form that absorbs maximally in the red region of the spectrum and the Pfr form that absorbs maximally in the far-red region. Photoconversion of Pr to Pfr induces an array of morphogenic responses, whereas reconversion of Pfr to Pr cancels the induction of those responses. Pfr controls the expression of a number of nuclear genes including those encoding the small subunit of ribulose-bisphosphate carboxylase, chlorophyll A/B binding protein, protochlorophyllide reductase, rRNA, etc. It also controls the expression of its own gene(s) in a negative feedback fashion. This chain is Phytochrome, found in Picea abies (Norway spruce).